The sequence spans 194 residues: Ras-like protein RAS1 (194 aa).

16–23 is a binding site for GTP; the sequence is GAGGVGKS. Positions 38 to 46 match the Effector region motif; that stretch reads YDPTIEDSY. GTP is bound by residues 63–67 and 122–125; these read DTAGQ and NKVD. At cysteine 191 the chain carries Cysteine methyl ester. Cysteine 191 carries S-geranylgeranyl cysteine lipidation. The propeptide at 192–194 is removed in mature form; it reads TLL.

The protein belongs to the small GTPase superfamily. Ras family.

Its subcellular location is the cell membrane. It carries out the reaction GTP + H2O = GDP + phosphate + H(+). With respect to regulation, alternates between an inactive form bound to GDP and an active form bound to GTP. Activated by a guanine nucleotide-exchange factor (GEF) and inactivated by a GTPase-activating protein (GAP). Its function is as follows. Ras proteins bind GDP/GTP and possess intrinsic GTPase activity. The protein is Ras-like protein RAS1 (RAS1) of Hydra vulgaris (Hydra).